The chain runs to 385 residues: Probable tRNA sulfurtransferase (385 aa).

Residues 57–160 enclose the THUMP domain; the sequence is DGVIERVKKV…RGNAYVFTDK (104 aa). Residues 180–181, 205–206, Arg262, Gly284, and Gln293 contribute to the ATP site; these read ML and YY.

It belongs to the ThiI family.

Its subcellular location is the cytoplasm. The enzyme catalyses [ThiI sulfur-carrier protein]-S-sulfanyl-L-cysteine + a uridine in tRNA + 2 reduced [2Fe-2S]-[ferredoxin] + ATP + H(+) = [ThiI sulfur-carrier protein]-L-cysteine + a 4-thiouridine in tRNA + 2 oxidized [2Fe-2S]-[ferredoxin] + AMP + diphosphate. The catalysed reaction is [ThiS sulfur-carrier protein]-C-terminal Gly-Gly-AMP + S-sulfanyl-L-cysteinyl-[cysteine desulfurase] + AH2 = [ThiS sulfur-carrier protein]-C-terminal-Gly-aminoethanethioate + L-cysteinyl-[cysteine desulfurase] + A + AMP + 2 H(+). The protein operates within cofactor biosynthesis; thiamine diphosphate biosynthesis. In terms of biological role, catalyzes the ATP-dependent transfer of a sulfur to tRNA to produce 4-thiouridine in position 8 of tRNAs, which functions as a near-UV photosensor. Also catalyzes the transfer of sulfur to the sulfur carrier protein ThiS, forming ThiS-thiocarboxylate. This is a step in the synthesis of thiazole, in the thiamine biosynthesis pathway. The sulfur is donated as persulfide by IscS. This is Probable tRNA sulfurtransferase from Clostridium perfringens (strain 13 / Type A).